The following is a 1403-amino-acid chain: Nidogen-2 (1403 aa).

A signal peptide spans 1–30 (MFRDPTAGWLTPPSPLSLLVMLLLLSRVGA). One can recognise an NIDO domain in the interval 108–274 (PFLADIDTSH…GVWAFHIGSR (167 aa)). The disordered stretch occupies residues 323–403 (EDVEYPPVEP…KQGRPVGEGE (81 aa)). O-linked (Xyl...) (chondroitin sulfate) serine glycans are attached at residues serine 386 and serine 475. Polar residues predominate over residues 386-395 (SASLDPQTKQ). One can recognise an EGF-like 1 domain in the interval 507–547 (NLETCEHSHGRCSQHAFCTDYTTGFCCHCQSRFYGNGKHCL). Intrachain disulfides connect cysteine 511/cysteine 524, cysteine 518/cysteine 533, and cysteine 535/cysteine 546. Residues 551 to 781 (APHRVNGKVS…GPVEVDSAPV (231 aa)) enclose the Nidogen G2 beta-barrel domain. Asparagine 681, asparagine 716, and asparagine 726 each carry an N-linked (GlcNAc...) asparagine glycan. Residues 782–823 (GVNPCYDGSHTCDTTARCHPGTGVDYTCECTPGFQGDGRSCV) form the EGF-like 2 domain. Cystine bridges form between cysteine 786–cysteine 799, cysteine 793–cysteine 809, cysteine 811–cysteine 822, cysteine 828–cysteine 841, cysteine 835–cysteine 850, cysteine 852–cysteine 865, cysteine 875–cysteine 890, cysteine 882–cysteine 900, cysteine 902–cysteine 913, cysteine 919–cysteine 930, cysteine 924–cysteine 939, cysteine 941–cysteine 952, cysteine 968–cysteine 991, cysteine 1002–cysteine 1009, cysteine 1011–cysteine 1033, cysteine 1047–cysteine 1071, cysteine 1082–cysteine 1089, and cysteine 1091–cysteine 1112. The EGF-like 3; calcium-binding domain maps to 824–862 (DVNECATGFHRCGPNSVCVNLVGSYRCECRSGYEFADDQ). One can recognise an EGF-like 4 domain in the interval 871 to 914 (PPNPCLDGSHTCAPEGQARCIHHGGSSFSCACLPGFIGTGHQCS). The 39-residue stretch at 915-953 (DVDECAENRCHEAAICYNTPGSFSCRCQPGYRGDGFHCT) folds into the EGF-like 5; calcium-binding domain. The Cell attachment site motif lies at 946–948 (RGD). Thyroglobulin type-1 domains follow at residues 965–1033 (LKPC…PPHC) and 1044–1112 (RTVC…RPAC). The disordered stretch occupies residues 1021 to 1043 (GTQTPPGSTPPHCGPPPEPTQRP). A compositionally biased stretch (pro residues) spans 1027–1040 (GSTPPHCGPPPEPT). Asparagine 1152 is a glycosylation site (N-linked (GlcNAc...) asparagine). LDL-receptor class B repeat units lie at residues 1182–1225 (RMVY…DHFR), 1226–1268 (RTMY…DPIR), 1269–1313 (GNLY…DPFS), 1314–1355 (KLLC…YADH), and 1357–1401 (YHTD…CPTG). Position 1336 is an omega-N-methylarginine (arginine 1336).

Interacts with LAMA2. Interacts with COL13A1. Interacts with EFEMP2. In terms of processing, highly N- and O-glycosylated.

The protein resides in the secreted. It is found in the extracellular space. It localises to the extracellular matrix. The protein localises to the basement membrane. In terms of biological role, cell adhesion glycoprotein. Might be involved in osteoblast differentiation. It probably has a role in cell-extracellular matrix interactions. The chain is Nidogen-2 (Nid2) from Mus musculus (Mouse).